Consider the following 402-residue polypeptide: UPF0597 protein THA_1286 (402 aa).

This sequence belongs to the UPF0597 family.

This Thermosipho africanus (strain TCF52B) protein is UPF0597 protein THA_1286.